The chain runs to 782 residues: LINE-1 type transposase domain-containing protein 1 (782 aa).

Disordered stretches follow at residues 1–30 (MSGV…TATS), 90–200 (QEGD…GGAG), and 338–397 (NKGT…SAEE). 2 stretches are compositionally biased toward basic and acidic residues: residues 11–27 (LQKE…ERKT) and 95–107 (ISER…KVEE). Residue S136 is modified to Phosphoserine. Composition is skewed to basic and acidic residues over residues 143–158 (SLER…HGRC) and 183–194 (EENRLKAPKESP). Over residues 347–396 (GEEEEISETQGEETSEGETSELGEEEGSESEEEEESSESEEEEESSESAE) the composition is skewed to acidic residues. Phosphoserine is present on residues S407, S409, S442, S478, S490, S559, and S567.

Belongs to the transposase 22 family.

This is LINE-1 type transposase domain-containing protein 1 (L1td1) from Mus musculus (Mouse).